The sequence spans 227 residues: A-type potassium channel modulatory protein KCNIP1 (227 aa).

Residues 38–94 form the EF-hand 1; degenerate domain; sequence LEMTMVCHRPEGLEQLEAQTNFTKRELQVLYRGFKNECPSGVVNEETFKQIYAQFFP. EF-hand domains lie at 97–132, 133–168, and 181–216; these read DASTYAHYLFNAFDTTQTGSVKFEDFVTALSILLRG, TVHEKLRWTFNLYDINKDGYINKEEMMDIVKAIYDM, and TPRQHVDVFFQKMDKNKDGIVTLDEFLESCQEDDNI. Ca(2+)-binding residues include D146, N148, D150, Y152, E157, D194, N196, D198, and E205. The interaction with KCND2 stretch occupies residues 214–227; the sequence is DNIMRSLQLFQNVM.

Belongs to the recoverin family. In terms of assembly, component of heteromultimeric potassium channels. Identified in potassium channel complexes containing KCND1, KCND2, KCND3, KCNIP1, KCNIP2, KCNIP3, KCNIP4, DPP6 and DPP10. Part of a heterooctamer composed of the tetrameric channel and four KCNIP1 chains. Probably part of a complex consisting of KCNIP1, KCNIP2 isoform 3 and KCND2. Self-associates to form homodimers and homotetramers. Interacts with KCNIP2 isoform 3 in a calcium-dependent manner. Interacts with KCND2; this interaction mediates the capture of both the N- and C-terminus of KCND2, thus preventing KCND2 N-type inactivation and modulates the channel gating kinetics. Interacts with KCND3; each KCNIP1 monomer interacts with two adjacent KCND3 subunits, through both the N-terminal inactivation ball of a KCND3 subunit and a C-terminal helix from the adjacent KCND3 subunit, clamping them together; this interaction stabilizes the tetrameric form and modulates the channel gating kinetics namely channel activation and inactivation kinetics and rate of recovery from inactivation. In terms of tissue distribution, expressed in brain. Found in a subpopulation of neurons widely distributed and enriched in Purkinje cells of the cerebellum and in the reticular thalamic and medial habenular nuclei.

The protein resides in the cell membrane. Its subcellular location is the cytoplasm. It is found in the cell projection. It localises to the dendrite. In terms of biological role, regulatory subunit of Kv4/D (Shal)-type voltage-gated rapidly inactivating A-type potassium channels. Regulates channel density, inactivation kinetics and rate of recovery from inactivation in a calcium-dependent and isoform-specific manner. Modulates KCND2/Kv4.2 currents. In vitro, modulates KCND1/Kv4.1 currents. Increases the presence of KCND2 at the cell surface. This chain is A-type potassium channel modulatory protein KCNIP1, found in Mus musculus (Mouse).